The following is a 482-amino-acid chain: Argininosuccinate synthase (482 aa).

ATP contacts are provided by residues 17–25 (AFSGGLDTS) and alanine 43. L-citrulline is bound at residue tyrosine 99. Residues glycine 129 and threonine 131 each contribute to the ATP site. Positions 131, 135, and 136 each coordinate L-aspartate. Asparagine 135 lines the L-citrulline pocket. Aspartate 136 lines the ATP pocket. Positions 139 and 192 each coordinate L-citrulline. ATP is bound at residue aspartate 194. The L-citrulline site is built by threonine 201, glutamate 203, and glutamate 280. Positions 461-482 (SRGEATDEETMLDRAAMESGTD) are disordered.

Belongs to the argininosuccinate synthase family. Type 2 subfamily. As to quaternary structure, homotetramer.

It is found in the cytoplasm. The enzyme catalyses L-citrulline + L-aspartate + ATP = 2-(N(omega)-L-arginino)succinate + AMP + diphosphate + H(+). It participates in amino-acid biosynthesis; L-arginine biosynthesis; L-arginine from L-ornithine and carbamoyl phosphate: step 2/3. In Streptomyces lavendulae, this protein is Argininosuccinate synthase (argG).